Here is a 794-residue protein sequence, read N- to C-terminus: Lon protease (794 aa).

Residues 13-204 (VPLYPLREII…KVYMHLTNEV (192 aa)) form the Lon N-terminal domain. 356–363 (GPPGVGKT) serves as a coordination point for ATP. Residues 592–773 (KDRVGVATGL…REVFVQALNP (182 aa)) enclose the Lon proteolytic domain. Catalysis depends on residues S679 and K722. Residues 774-788 (TSPAPTAATSARTPA) show a composition bias toward low complexity. The interval 774-794 (TSPAPTAATSARTPAGAPPPQ) is disordered.

This sequence belongs to the peptidase S16 family. As to quaternary structure, homohexamer. Organized in a ring with a central cavity.

The protein resides in the cytoplasm. The catalysed reaction is Hydrolysis of proteins in presence of ATP.. In terms of biological role, ATP-dependent serine protease that mediates the selective degradation of mutant and abnormal proteins as well as certain short-lived regulatory proteins. Required for cellular homeostasis and for survival from DNA damage and developmental changes induced by stress. Degrades polypeptides processively to yield small peptide fragments that are 5 to 10 amino acids long. Binds to DNA in a double-stranded, site-specific manner. The protein is Lon protease of Citrifermentans bemidjiense (strain ATCC BAA-1014 / DSM 16622 / JCM 12645 / Bem) (Geobacter bemidjiensis).